The following is a 454-amino-acid chain: Probable mitochondrial saccharopine dehydrogenase-like oxidoreductase At5g39410 (454 aa).

Methionine 1 bears the N-acetylmethionine mark. A disordered region spans residues 215–234 (RRSRPRRPRPTICGPPAKGP).

It belongs to the saccharopine dehydrogenase family.

It is found in the mitochondrion membrane. The sequence is that of Probable mitochondrial saccharopine dehydrogenase-like oxidoreductase At5g39410 from Arabidopsis thaliana (Mouse-ear cress).